Reading from the N-terminus, the 134-residue chain is MRMLLHLSLLALGASYMYAIPTEIPTSALVKETLTLLSTHRTLLIGNETLRIPVPVHKHHQLCTEEIFQGIGTLESQTLQGGTVERLFKNLSLIKKYIDGQKKKCGEERRRVNQFLDYLQEFLGVMNTEWIIES.

The first 19 residues, 1–19 (MRMLLHLSLLALGASYMYA), serve as a signal peptide directing secretion. O-linked (GalNAc...) threonine glycosylation is present at Thr-22. 2 N-linked (GlcNAc...) asparagine glycosylation sites follow: Asn-47 and Asn-90.

Belongs to the IL-5 family. Homodimer; disulfide-linked. Interacts with IL5RA. Interacts with CSF2RB.

Its subcellular location is the secreted. Functionally, homodimeric cytokine expressed predominantly by T-lymphocytes and NK cells that plays an important role in the survival, differentiation, and chemotaxis of eosinophils. Also acts on activated and resting B-cells to induce immunoglobulin production, growth, and differentiation. Mechanistically, exerts its biological effects through a receptor composed of IL5RA subunit and the cytokine receptor common subunit beta/CSF2RB. Binding to the receptor leads to activation of various kinases including LYN, SYK and JAK2 and thereby propagates signals through the RAS-MAPK and JAK-STAT5 pathways respectively. The protein is Interleukin-5 (IL5) of Cercocebus atys (Sooty mangabey).